Consider the following 274-residue polypeptide: Large ribosomal subunit protein uL2 (274 aa).

Disordered regions lie at residues 28 to 54 (KPFA…TRHI) and 221 to 274 (RGTA…RSKK). Residues 39 to 49 (KTGGRNNNGRI) are compositionally biased toward polar residues.

It belongs to the universal ribosomal protein uL2 family. As to quaternary structure, part of the 50S ribosomal subunit. Forms a bridge to the 30S subunit in the 70S ribosome.

One of the primary rRNA binding proteins. Required for association of the 30S and 50S subunits to form the 70S ribosome, for tRNA binding and peptide bond formation. It has been suggested to have peptidyltransferase activity; this is somewhat controversial. Makes several contacts with the 16S rRNA in the 70S ribosome. This Edwardsiella ictaluri (strain 93-146) protein is Large ribosomal subunit protein uL2.